Consider the following 154-residue polypeptide: Oleosin 16.4 kDa (154 aa).

N-acetylalanine is present on Ala-2. The polar stretch occupies residues 2 to 33 (ADRDRSYRTFDQVVRGDRTNYQSGPSTTQVLT). The next 3 helical transmembrane spans lie at 31-51 (VLTV…AGLT), 65-85 (LFVI…MAVA), and 86-106 (GFLS…YVFN). Residues 34–105 (VLTLLPIGGT…TGLSSLSYVF (72 aa)) are hydrophobic.

It belongs to the oleosin family.

The protein localises to the lipid droplet. It localises to the membrane. May have a structural role to stabilize the lipid body during desiccation of the seed by preventing coalescence of the oil. Probably interacts with both lipid and phospholipid moieties of lipid bodies. May also provide recognition signals for specific lipase anchorage in lipolysis during seedling growth. In Gossypium hirsutum (Upland cotton), this protein is Oleosin 16.4 kDa (MATP7).